A 729-amino-acid polypeptide reads, in one-letter code: Polyribonucleotide nucleotidyltransferase (729 aa).

Positions 485 and 491 each coordinate Mg(2+). The 60-residue stretch at 552-611 folds into the KH domain; that stretch reads PRITTMKVAEDKIRTIIGKGGATIKGLIESTGVSIDIDDSGVVQLFSPDKMALEEAQKQI. Residues 621–689 enclose the S1 motif domain; the sequence is GQTYQGKVSK…KQGRVKLEWK (69 aa).

The protein belongs to the polyribonucleotide nucleotidyltransferase family. Component of the RNA degradosome, which is a multiprotein complex involved in RNA processing and mRNA degradation. It depends on Mg(2+) as a cofactor.

The protein resides in the cytoplasm. The catalysed reaction is RNA(n+1) + phosphate = RNA(n) + a ribonucleoside 5'-diphosphate. In terms of biological role, involved in mRNA degradation. Catalyzes the phosphorolysis of single-stranded polyribonucleotides processively in the 3'- to 5'-direction. In Legionella pneumophila subsp. pneumophila (strain Philadelphia 1 / ATCC 33152 / DSM 7513), this protein is Polyribonucleotide nucleotidyltransferase.